The following is a 118-amino-acid chain: UPF0102 protein NE0711 (118 aa).

It belongs to the UPF0102 family.

The chain is UPF0102 protein NE0711 from Nitrosomonas europaea (strain ATCC 19718 / CIP 103999 / KCTC 2705 / NBRC 14298).